Reading from the N-terminus, the 430-residue chain is Enolase (430 aa).

A (2R)-2-phosphoglycerate-binding site is contributed by glutamine 167. The Proton donor role is filled by glutamate 209. Residues aspartate 246, glutamate 287, and aspartate 314 each contribute to the Mg(2+) site. (2R)-2-phosphoglycerate contacts are provided by lysine 339, arginine 368, and serine 369. The active-site Proton acceptor is the lysine 339.

The protein belongs to the enolase family. The cofactor is Mg(2+).

The protein localises to the cytoplasm. The protein resides in the secreted. It is found in the cell surface. It carries out the reaction (2R)-2-phosphoglycerate = phosphoenolpyruvate + H2O. The protein operates within carbohydrate degradation; glycolysis; pyruvate from D-glyceraldehyde 3-phosphate: step 4/5. In terms of biological role, catalyzes the reversible conversion of 2-phosphoglycerate (2-PG) into phosphoenolpyruvate (PEP). It is essential for the degradation of carbohydrates via glycolysis. The chain is Enolase from Synechococcus sp. (strain ATCC 27144 / PCC 6301 / SAUG 1402/1) (Anacystis nidulans).